The following is a 252-amino-acid chain: 2,5-diamino-6-ribosylamino-4(3H)-pyrimidinone 5'-phosphate reductase (252 aa).

Residues T80, D84, V166, and 189-193 (GGIVI) each bind NADP(+).

The protein belongs to the HTP reductase family. In terms of assembly, homodimer.

The catalysed reaction is 2,5-diamino-6-(1-D-ribitylamino)pyrimidin-4(3H)-one 5'-phosphate + NADP(+) = 2,5-diamino-6-(1-D-ribosylamino)pyrimidin-4(3H)-one 5'-phosphate + NADPH + H(+). It catalyses the reaction 2,5-diamino-6-(1-D-ribitylamino)pyrimidin-4(3H)-one 5'-phosphate + NAD(+) = 2,5-diamino-6-(1-D-ribosylamino)pyrimidin-4(3H)-one 5'-phosphate + NADH + H(+). The protein operates within cofactor biosynthesis; riboflavin biosynthesis. Its function is as follows. Catalyzes an early step in riboflavin biosynthesis, the NADPH-dependent reduction of the ribose side chain of 2,5-diamino-6-ribosylamino-4(3H)-pyrimidinone 5'-phosphate, yielding 2,5-diamino-6-ribitylamino-4(3H)-pyrimidinone 5'-phosphate. The chain is 2,5-diamino-6-ribosylamino-4(3H)-pyrimidinone 5'-phosphate reductase (RIB7) from Kluyveromyces lactis (strain ATCC 8585 / CBS 2359 / DSM 70799 / NBRC 1267 / NRRL Y-1140 / WM37) (Yeast).